The sequence spans 224 residues: Elongation factor Ts (224 aa).

Positions 81 to 84 are involved in Mg(2+) ion dislocation from EF-Tu; it reads TDFV.

Belongs to the EF-Ts family.

The protein localises to the cytoplasm. In terms of biological role, associates with the EF-Tu.GDP complex and induces the exchange of GDP to GTP. It remains bound to the aminoacyl-tRNA.EF-Tu.GTP complex up to the GTP hydrolysis stage on the ribosome. The polypeptide is Elongation factor Ts (Finegoldia magna (strain ATCC 29328 / DSM 20472 / WAL 2508) (Peptostreptococcus magnus)).